The chain runs to 133 residues: Fluoride-specific ion channel FluC (133 aa).

Transmembrane regions (helical) follow at residues 4-24, 35-55, 66-86, and 107-127; these read LLWIALGGSLGALCRYGLSVL, WGTLAANLVGCFLIGGLWVLA, VFIFTGGIGSLTTFSTYSLES, and VLGLVLVAIGAGCALFLLGGP. Na(+) is bound by residues Gly-74 and Thr-77.

This sequence belongs to the fluoride channel Fluc/FEX (TC 1.A.43) family.

It localises to the cell inner membrane. The catalysed reaction is fluoride(in) = fluoride(out). With respect to regulation, na(+) is not transported, but it plays an essential structural role and its presence is essential for fluoride channel function. Functionally, fluoride-specific ion channel. Important for reducing fluoride concentration in the cell, thus reducing its toxicity. This is Fluoride-specific ion channel FluC from Salinibacter ruber (strain DSM 13855 / M31).